The chain runs to 387 residues: Phosphoglycerate kinase (387 aa).

Residues 21-23, R36, 59-62, R113, and R146 each bind substrate; these read DLN and HLGR. ATP-binding positions include K197, E314, and 340 to 343; that span reads GGDT.

The protein belongs to the phosphoglycerate kinase family. Monomer.

The protein localises to the cytoplasm. It catalyses the reaction (2R)-3-phosphoglycerate + ATP = (2R)-3-phospho-glyceroyl phosphate + ADP. The protein operates within carbohydrate degradation; glycolysis; pyruvate from D-glyceraldehyde 3-phosphate: step 2/5. The protein is Phosphoglycerate kinase of Pseudomonas putida (strain ATCC 700007 / DSM 6899 / JCM 31910 / BCRC 17059 / LMG 24140 / F1).